The chain runs to 303 residues: Exosome complex component RRP4 homolog (303 aa).

Residues 175-213 (GILIKVPPHLIKKSKKHFHTLPYGMAVIIGCNGSVWVTP) form the KH domain.

The protein belongs to the RRP4 family. In terms of assembly, component of the RNA exosome complex. Ubiquitously expressed.

Its subcellular location is the nucleus. The protein resides in the nucleolus. The protein localises to the nucleoplasm. In terms of biological role, non-catalytic component of the RNA exosome complex which has 3'-&gt;5' exoribonuclease activity and participates in a multitude of cellular RNA processing and degradation events. Involved in regulation of antisense ribosomal siRNA production. Involved in response to cold-warm shock. This Caenorhabditis elegans protein is Exosome complex component RRP4 homolog.